Here is a 360-residue protein sequence, read N- to C-terminus: Dihydroorotate dehydrogenase (quinone) (360 aa).

Residues 66–70 and Thr90 contribute to the FMN site; that span reads AGFDK. Residue Lys70 participates in substrate binding. 115–119 is a substrate binding site; the sequence is NRMGF. FMN contacts are provided by Asn143 and Asn176. Asn176 lines the substrate pocket. The active-site Nucleophile is the Ser179. Asn181 contacts substrate. FMN-binding residues include Lys212 and Thr240. 241 to 242 is a substrate binding site; the sequence is NT. Residues Gly264, Gly293, and 314-315 each bind FMN; that span reads YT.

The protein belongs to the dihydroorotate dehydrogenase family. Type 2 subfamily. Monomer. FMN serves as cofactor.

It localises to the cell membrane. The enzyme catalyses (S)-dihydroorotate + a quinone = orotate + a quinol. Its pathway is pyrimidine metabolism; UMP biosynthesis via de novo pathway; orotate from (S)-dihydroorotate (quinone route): step 1/1. Functionally, catalyzes the conversion of dihydroorotate to orotate with quinone as electron acceptor. This chain is Dihydroorotate dehydrogenase (quinone), found in Mycobacterium ulcerans (strain Agy99).